Reading from the N-terminus, the 556-residue chain is 2-succinyl-5-enolpyruvyl-6-hydroxy-3-cyclohexene-1-carboxylate synthase (556 aa).

This sequence belongs to the TPP enzyme family. MenD subfamily. Homodimer. It depends on Mg(2+) as a cofactor. The cofactor is Mn(2+). Thiamine diphosphate is required as a cofactor.

The catalysed reaction is isochorismate + 2-oxoglutarate + H(+) = 5-enolpyruvoyl-6-hydroxy-2-succinyl-cyclohex-3-ene-1-carboxylate + CO2. The protein operates within quinol/quinone metabolism; 1,4-dihydroxy-2-naphthoate biosynthesis; 1,4-dihydroxy-2-naphthoate from chorismate: step 2/7. It functions in the pathway quinol/quinone metabolism; menaquinone biosynthesis. Its function is as follows. Catalyzes the thiamine diphosphate-dependent decarboxylation of 2-oxoglutarate and the subsequent addition of the resulting succinic semialdehyde-thiamine pyrophosphate anion to isochorismate to yield 2-succinyl-5-enolpyruvyl-6-hydroxy-3-cyclohexene-1-carboxylate (SEPHCHC). This is 2-succinyl-5-enolpyruvyl-6-hydroxy-3-cyclohexene-1-carboxylate synthase from Shigella boydii serotype 18 (strain CDC 3083-94 / BS512).